Consider the following 289-residue polypeptide: Mas-related G-protein coupled receptor member G (289 aa).

The Extracellular portion of the chain corresponds to 1-13 (MFSIFNIWGTFNK). The helical transmembrane segment at 14 to 34 (VLFFLSLTVSLAGLVGNALLL) threads the bilayer. At 35–52 (WHLGLHIKKGPFNTYLLH) the chain is on the cytoplasmic side. The chain crosses the membrane as a helical span at residues 53–73 (LAAADFLFLSCQVGFSIATIV). Over 74-78 (SGHED) the chain is Extracellular. A helical membrane pass occupies residues 79–99 (TLYFPVTFLWFAVGLWLLAAF). At 100-120 (SVDCCLAYMFPSFCSPNRRPR) the chain is on the cytoplasmic side. Residues 121–141 (FTSVVLCLVIWALTMPAVLLP) traverse the membrane as a helical segment. The Extracellular portion of the chain corresponds to 142–164 (ANACGLLKNGMSLLVCLKYHWTS). The chain crosses the membrane as a helical span at residues 165 to 185 (VTWLAVLSGMACGASKFLLIF). Residues 186–199 (GNCCSSQPPPKFCK) are Cytoplasmic-facing. Residues 200–220 (LAQCSGILLFFCRLPLVVYWC) traverse the membrane as a helical segment. The Extracellular segment spans residues 221 to 222 (LR). The chain crosses the membrane as a helical span at residues 223–243 (PVLKFLLPFFFPLATLLACID). Over 244–289 (SSAKPLLYYMKGRQLRKDPLQVALNRALGEESQSGLGGLSLPMHQV) the chain is Cytoplasmic.

The protein belongs to the G-protein coupled receptor 1 family. Mas subfamily.

Its subcellular location is the cell membrane. Orphan receptor. May regulate nociceptor function and/or development, including the sensation or modulation of pain. The chain is Mas-related G-protein coupled receptor member G (Mrgprg) from Mus musculus (Mouse).